The chain runs to 274 residues: Tryptase beta-2 (274 aa).

The N-terminal stretch at 1–19 (MLKLLLLLALSPLASLVHA) is a signal peptide. A propeptide spans 20–29 (APCPVKQRVG) (activation peptide). Residues 30–271 (IVGGREASES…YLDWIHRYVP (242 aa)) enclose the Peptidase S1 domain. Cysteine 58 and cysteine 74 form a disulfide bridge. Residue histidine 73 is the Charge relay system of the active site. The residue at position 96 (tyrosine 96) is a Phosphotyrosine. The N-linked (GlcNAc...) asparagine glycan is linked to asparagine 104. Aspartate 120 acts as the Charge relay system in catalysis. Asparagine 131 carries an N-linked (GlcNAc...) asparagine glycan. Intrachain disulfides connect cysteine 154-cysteine 229, cysteine 187-cysteine 210, and cysteine 219-cysteine 247. Residue serine 223 is the Charge relay system of the active site.

This sequence belongs to the peptidase S1 family. Tryptase subfamily. As to quaternary structure, homotetramer. The active tetramer is converted to inactive monomers at neutral and acidic pH in the absence of heparin. Low concentrations of inactive monomers become active monomers at pH 6.0 in the presence of heparin. When the concentration of active monomers is higher, they convert to active monomers and then to active tetramers. These monomers are active and functionally distinct from the tetrameric enzyme. In contrast to the hidden active sites in the tetrameric form, the active site of the monomeric form is accessible for macromolecular proteins and inhibitors, e.g. fibrinogen which is a substrate for the monomeric but not for the tetrameric form. The monomeric form forms a complex with SERPINB6.

It localises to the secreted. It catalyses the reaction Preferential cleavage: Arg-|-Xaa, Lys-|-Xaa, but with more restricted specificity than trypsin.. Functionally, tryptase is the major neutral protease present in mast cells and is secreted upon the coupled activation-degranulation response of this cell type. Plays a role in innate immunity. The chain is Tryptase beta-2 (Tpsb2) from Rattus norvegicus (Rat).